Here is a 166-residue protein sequence, read N- to C-terminus: Large ribosomal subunit protein uL10 (166 aa).

It belongs to the universal ribosomal protein uL10 family. In terms of assembly, part of the ribosomal stalk of the 50S ribosomal subunit. The N-terminus interacts with L11 and the large rRNA to form the base of the stalk. The C-terminus forms an elongated spine to which L12 dimers bind in a sequential fashion forming a multimeric L10(L12)X complex.

In terms of biological role, forms part of the ribosomal stalk, playing a central role in the interaction of the ribosome with GTP-bound translation factors. This is Large ribosomal subunit protein uL10 from Bacillus cereus (strain ATCC 14579 / DSM 31 / CCUG 7414 / JCM 2152 / NBRC 15305 / NCIMB 9373 / NCTC 2599 / NRRL B-3711).